A 346-amino-acid chain; its full sequence is GPALPP motifs-containing protein 1 (346 aa).

Disordered regions lie at residues 1–283 (MARD…ESLM) and 289–308 (KLKS…IPFD). The residue at position 2 (Ala-2) is an N-acetylalanine. A GPALPP motif 1 motif is present at residues 7-12 (GPALPP). Phosphoserine is present on Ser-28. Residues 32-37 (GPALPP) carry the GPALPP motif 2 motif. Residues 60-69 (GNQESEEEDT) are compositionally biased toward acidic residues. A GPALPP motif 3 motif is present at residues 91–96 (GPALPP). Phosphoserine is present on Ser-104. Residues 106 to 115 (PRPIIGPALP) show a composition bias toward pro residues. The GPALPP motif 4 signature appears at 111-116 (GPALPP). Over residues 123–132 (QKNDKGREDP) the composition is skewed to basic and acidic residues. 3 positions are modified to phosphoserine: Ser-136, Ser-141, and Ser-146. Residues 142–152 (EEAESGEDEDI) show a composition bias toward acidic residues. Basic and acidic residues-rich tracts occupy residues 169–193 (EFEK…KPIT) and 233–267 (PADR…KRLA). Lys-277 is covalently cross-linked (Glycyl lysine isopeptide (Lys-Gly) (interchain with G-Cter in SUMO2)). Residues 293–308 (KAAEDKNKHQERIPFD) show a composition bias toward basic and acidic residues. Lys-314 is covalently cross-linked (Glycyl lysine isopeptide (Lys-Gly) (interchain with G-Cter in SUMO2)).

This chain is GPALPP motifs-containing protein 1 (Gpalpp1), found in Mus musculus (Mouse).